The following is a 270-amino-acid chain: Ribosomal RNA small subunit methyltransferase A (270 aa).

Residues Asn18, Leu20, Gly45, Glu66, Asp91, and Asn112 each coordinate S-adenosyl-L-methionine.

Belongs to the class I-like SAM-binding methyltransferase superfamily. rRNA adenine N(6)-methyltransferase family. RsmA subfamily.

It is found in the cytoplasm. It carries out the reaction adenosine(1518)/adenosine(1519) in 16S rRNA + 4 S-adenosyl-L-methionine = N(6)-dimethyladenosine(1518)/N(6)-dimethyladenosine(1519) in 16S rRNA + 4 S-adenosyl-L-homocysteine + 4 H(+). Its function is as follows. Specifically dimethylates two adjacent adenosines (A1518 and A1519) in the loop of a conserved hairpin near the 3'-end of 16S rRNA in the 30S particle. May play a critical role in biogenesis of 30S subunits. In Shewanella piezotolerans (strain WP3 / JCM 13877), this protein is Ribosomal RNA small subunit methyltransferase A.